Here is a 133-residue protein sequence, read N- to C-terminus: Small ribosomal subunit protein eS24 (133 aa).

The residue at position 1 (methionine 1) is an N-acetylmethionine. Threonine 9 carries the post-translational modification Phosphothreonine. Lysine 37 participates in a covalent cross-link: Glycyl lysine isopeptide (Lys-Gly) (interchain with G-Cter in SUMO2). Positions 92–133 (ARHGLYEKKKTSRKQRKERKNRMKKVRGTAKANVGAGKKPKE) are disordered. Residues 101–119 (KTSRKQRKERKNRMKKVRG) show a composition bias toward basic residues.

It belongs to the eukaryotic ribosomal protein eS24 family. In terms of assembly, component of the small ribosomal subunit. Part of the small subunit (SSU) processome, composed of more than 70 proteins and the RNA chaperone small nucleolar RNA (snoRNA) U3.

The protein localises to the cytoplasm. Its subcellular location is the nucleus. It localises to the nucleolus. Component of the small ribosomal subunit. The ribosome is a large ribonucleoprotein complex responsible for the synthesis of proteins in the cell. Required for processing of pre-rRNA and maturation of 40S ribosomal subunits. Part of the small subunit (SSU) processome, first precursor of the small eukaryotic ribosomal subunit. During the assembly of the SSU processome in the nucleolus, many ribosome biogenesis factors, an RNA chaperone and ribosomal proteins associate with the nascent pre-rRNA and work in concert to generate RNA folding, modifications, rearrangements and cleavage as well as targeted degradation of pre-ribosomal RNA by the RNA exosome. This chain is Small ribosomal subunit protein eS24 (RPS24), found in Oryctolagus cuniculus (Rabbit).